The sequence spans 470 residues: Poly(A) polymerase catalytic subunit (470 aa).

Active-site residues include D192 and D194.

It belongs to the poxviridae poly(A) polymerase catalytic subunit family. Heterodimer of a large (catalytic) subunit and a small (regulatory) subunit.

It carries out the reaction RNA(n) + ATP = RNA(n)-3'-adenine ribonucleotide + diphosphate. In terms of biological role, polymerase that creates the 3'-poly(A) tail of mRNA's. The chain is Poly(A) polymerase catalytic subunit (PAPL) from Odocoileus hemionus (Mule deer).